The primary structure comprises 250 residues: UPF0736 protein BLi01230/BL03322 (250 aa).

This sequence belongs to the UPF0736 family.

This Bacillus licheniformis (strain ATCC 14580 / DSM 13 / JCM 2505 / CCUG 7422 / NBRC 12200 / NCIMB 9375 / NCTC 10341 / NRRL NRS-1264 / Gibson 46) protein is UPF0736 protein BLi01230/BL03322.